The primary structure comprises 485 residues: MINASLKELSLALAAKKVSSVELSSLFLDRIERLNPTLNAFVTVDREKSLQMARDADARIAAGTAGPLTGIPIAQKDIFCAEGWLSTCGSKMLANFVSPYDATVIRKMHAEAGLVSLGKTNMDEFAMGSSNETSFFGSVRNPWDTQRVPGGSSGGSAAAVAARLAPAATGTDTGGSIRQPAALCNLTGLKPTYGVVSRYGMIAFASSLDQGGPMAASAEDCALLLNTMVGFDERDSTSLERPVEDYARDLDKPLDGLRIGLPKEFFGEGCDAEVMAAVRAAIAEYEKLGATCVEISLPNSHLSVPAYYVIAPAEASSNLSRFDGVRYGYRAPEYGNLDDMYMKTRAQGFGAEVKRRILIGAYVLSHGYYDAYYLQAQRIRRLIANDFVEAFKHCDVIMSPTSPSTAFKLGEKAADPVQMYLSDIYTIAVNLAGLPGMSIPCGFVGGLPVGLQLIGNYFAENRLLNVAHRYQQATDWHQRRPGGIE.

Residues Lys76 and Ser152 each act as charge relay system in the active site. Ser176 acts as the Acyl-ester intermediate in catalysis.

It belongs to the amidase family. GatA subfamily. In terms of assembly, heterotrimer of A, B and C subunits.

The enzyme catalyses L-glutamyl-tRNA(Gln) + L-glutamine + ATP + H2O = L-glutaminyl-tRNA(Gln) + L-glutamate + ADP + phosphate + H(+). Functionally, allows the formation of correctly charged Gln-tRNA(Gln) through the transamidation of misacylated Glu-tRNA(Gln) in organisms which lack glutaminyl-tRNA synthetase. The reaction takes place in the presence of glutamine and ATP through an activated gamma-phospho-Glu-tRNA(Gln). This is Glutamyl-tRNA(Gln) amidotransferase subunit A from Dechloromonas aromatica (strain RCB).